Consider the following 99-residue polypeptide: MTIYSYLLLLCMVMFVTFFTQKNNILSLMVVLESLMLITLSSVAVSLNYMAGSSMVMILLLCFAAAEAALSLSLLVCFIQVNSSCEMLAMNKILFAKKS.

3 consecutive transmembrane segments (helical) span residues 1-21, 25-45, and 56-76; these read MTIYSYLLLLCMVMFVTFFTQ, ILSLMVVLESLMLITLSSVAV, and VMILLLCFAAAEAALSLSLLV.

Belongs to the complex I subunit 4L family.

The protein localises to the mitochondrion membrane. The enzyme catalyses a ubiquinone + NADH + 5 H(+)(in) = a ubiquinol + NAD(+) + 4 H(+)(out). Functionally, core subunit of the mitochondrial membrane respiratory chain NADH dehydrogenase (Complex I) that is believed to belong to the minimal assembly required for catalysis. Complex I functions in the transfer of electrons from NADH to the respiratory chain. The immediate electron acceptor for the enzyme is believed to be ubiquinone. This Albinaria caerulea (Land snail) protein is NADH-ubiquinone oxidoreductase chain 4L (ND4L).